Reading from the N-terminus, the 429-residue chain is Ribosomal RNA small subunit methyltransferase B (429 aa).

S-adenosyl-L-methionine is bound by residues cysteine 254–lysine 260, aspartate 277, aspartate 303, and aspartate 322. The active-site Nucleophile is the cysteine 375. The interval alanine 397 to aspartate 419 is disordered. Over residues glutamate 400–leucine 412 the composition is skewed to polar residues.

The protein belongs to the class I-like SAM-binding methyltransferase superfamily. RsmB/NOP family.

The protein localises to the cytoplasm. The enzyme catalyses cytidine(967) in 16S rRNA + S-adenosyl-L-methionine = 5-methylcytidine(967) in 16S rRNA + S-adenosyl-L-homocysteine + H(+). Its function is as follows. Specifically methylates the cytosine at position 967 (m5C967) of 16S rRNA. The polypeptide is Ribosomal RNA small subunit methyltransferase B (Salmonella heidelberg (strain SL476)).